Reading from the N-terminus, the 432-residue chain is Adenylosuccinate synthetase (432 aa).

Residues 13–19 (GDEGKGK) and 41–43 (GHT) contribute to the GTP site. Aspartate 14 serves as the catalytic Proton acceptor. Residues aspartate 14 and glycine 41 each contribute to the Mg(2+) site. Residues 14–17 (DEGK), 39–42 (NAGH), threonine 130, arginine 144, glutamine 225, threonine 240, and arginine 304 each bind IMP. The Proton donor role is filled by histidine 42. 300 to 306 (AVTGRPR) contributes to the substrate binding site. GTP is bound by residues arginine 306, 332–334 (KLD), and 415–417 (STG).

It belongs to the adenylosuccinate synthetase family. As to quaternary structure, homodimer. It depends on Mg(2+) as a cofactor.

It localises to the cytoplasm. The catalysed reaction is IMP + L-aspartate + GTP = N(6)-(1,2-dicarboxyethyl)-AMP + GDP + phosphate + 2 H(+). The protein operates within purine metabolism; AMP biosynthesis via de novo pathway; AMP from IMP: step 1/2. Functionally, plays an important role in the de novo pathway of purine nucleotide biosynthesis. Catalyzes the first committed step in the biosynthesis of AMP from IMP. This chain is Adenylosuccinate synthetase, found in Haemophilus influenzae (strain 86-028NP).